A 56-amino-acid polypeptide reads, in one-letter code: Large ribosomal subunit protein bL32 (56 aa).

A disordered region spans residues 1 to 29 (MAVQQNKPSRSKRGMRRSHDALTTSSVSV).

It belongs to the bacterial ribosomal protein bL32 family.

This is Large ribosomal subunit protein bL32 from Pectobacterium atrosepticum (strain SCRI 1043 / ATCC BAA-672) (Erwinia carotovora subsp. atroseptica).